The following is a 472-amino-acid chain: ATP synthase subunit beta (472 aa).

An ATP-binding site is contributed by 149-156; the sequence is GGAGVGKT.

It belongs to the ATPase alpha/beta chains family. As to quaternary structure, F-type ATPases have 2 components, CF(1) - the catalytic core - and CF(0) - the membrane proton channel. CF(1) has five subunits: alpha(3), beta(3), gamma(1), delta(1), epsilon(1). CF(0) has three main subunits: a(1), b(2) and c(9-12). The alpha and beta chains form an alternating ring which encloses part of the gamma chain. CF(1) is attached to CF(0) by a central stalk formed by the gamma and epsilon chains, while a peripheral stalk is formed by the delta and b chains.

It is found in the cell inner membrane. It carries out the reaction ATP + H2O + 4 H(+)(in) = ADP + phosphate + 5 H(+)(out). Its function is as follows. Produces ATP from ADP in the presence of a proton gradient across the membrane. The catalytic sites are hosted primarily by the beta subunits. This Pelagibacter ubique (strain HTCC1062) protein is ATP synthase subunit beta.